A 240-amino-acid chain; its full sequence is UDP-2,3-diacylglucosamine hydrolase (240 aa).

The Mn(2+) site is built by Asp8, His10, Asp41, Asn79, and His114. 79–80 (NR) is a binding site for substrate. The substrate site is built by Asp122, Ser160, Asn164, Lys167, and His195. 2 residues coordinate Mn(2+): His195 and His197.

Belongs to the LpxH family. Requires Mn(2+) as cofactor.

The protein localises to the cell inner membrane. It catalyses the reaction UDP-2-N,3-O-bis[(3R)-3-hydroxytetradecanoyl]-alpha-D-glucosamine + H2O = 2-N,3-O-bis[(3R)-3-hydroxytetradecanoyl]-alpha-D-glucosaminyl 1-phosphate + UMP + 2 H(+). Its pathway is glycolipid biosynthesis; lipid IV(A) biosynthesis; lipid IV(A) from (3R)-3-hydroxytetradecanoyl-[acyl-carrier-protein] and UDP-N-acetyl-alpha-D-glucosamine: step 4/6. In terms of biological role, hydrolyzes the pyrophosphate bond of UDP-2,3-diacylglucosamine to yield 2,3-diacylglucosamine 1-phosphate (lipid X) and UMP by catalyzing the attack of water at the alpha-P atom. Involved in the biosynthesis of lipid A, a phosphorylated glycolipid that anchors the lipopolysaccharide to the outer membrane of the cell. The protein is UDP-2,3-diacylglucosamine hydrolase of Salmonella paratyphi A (strain ATCC 9150 / SARB42).